A 474-amino-acid chain; its full sequence is MPREIITLQVGQCGNQIGMEFWKQLCLEHGISKDGILEDFATQGGDRKDVFFYQADDQHYIPRALLIDLEPRVINGIQNGEYRNLYNHENIFLSDHGGGAGNNWASGYHQGKGVEEEIMDMIDREADGSDSLEGFVLCHSIAGGTGSGMGSYLLETLNDRYSKKLVQTYSVFPNQMETSDVVVQPYNSLLTLKRLTLNADCVVVLDNTALNRIAVERLHLTNPTFAQTNSLVSTVMSASTTTLRYPGYMNNDLVGLLASLIPTPRCHFLMTGYTPLTVERQANVIRKTTVLDVMRRLLQTKNIMVSSYARNKEASQAKYISILNIIQGEVDPTQVHESLQRIRERKLVNFIDWGPASIQVALSKKSPYVQTSHRVSGLMLASHTSIRHLFSRCLSQYDKLRKKQAFLDNYRKFPMFADNDLSEFDESRDIIESLVDEYKACESPDYIKWGMEDPGQLMTGEGNASGVADPKLAF.

Position 142-148 (142-148 (AGGTGSG)) interacts with GTP.

This sequence belongs to the tubulin family. As to quaternary structure, gamma-tubulin complex is composed of gamma-tubulin and GCP proteins.

The protein resides in the cytoplasm. Its subcellular location is the cytoskeleton. The protein localises to the microtubule organizing center. It localises to the nucleus. It is found in the cell cortex. Tubulin is the major constituent of microtubules. The gamma chain is found at microtubule organizing centers (MTOC) such as the spindle poles, suggesting that it is involved in the minus-end nucleation of microtubule assembly. Functionally, gamma-tubulin complex is essential for the control of microtubular network remodeling in the course of initiation and development of giant-feeding cells, and for the successful reproduction of nematodes (e.g. Meloidogyne spp.) in their plant hosts. In Arabidopsis thaliana (Mouse-ear cress), this protein is Tubulin gamma-2 chain (TUBG2).